An 81-amino-acid chain; its full sequence is uncharacterized protein (81 aa).

Residues 1-16 (MNRLTFYGLCLSGAVG) form the signal peptide. A disordered region spans residues 55–81 (TIDPHHNHHDDHHDSHGHGHGKIKGHH). Basic and acidic residues predominate over residues 57 to 71 (DPHHNHHDDHHDSHG). Over residues 72 to 81 (HGHGKIKGHH) the composition is skewed to basic residues.

The protein resides in the secreted. This is an uncharacterized protein from Dictyostelium discoideum (Social amoeba).